The primary structure comprises 457 residues: Multidrug resistance protein MdtK (457 aa).

The Cytoplasmic portion of the chain corresponds to 1–10 (MQKYISEARL). Residues 11-31 (LLALAIPVILAQIAQTAMGFV) form a helical membrane-spanning segment. Over 32–52 (DTVMAGGYSATDMAAVAIGTS) the chain is Periplasmic. Residues 53–73 (IWLPAILFGHGLLLALTPVIA) traverse the membrane as a helical segment. At 74-92 (QLNGSGRRERIAHQVRQGF) the chain is on the cytoplasmic side. Residues 93–113 (WLAGFVSVLIMLVLWNAGYII) form a helical membrane-spanning segment. Topologically, residues 114 to 126 (RSMENIDPALADK) are periplasmic. A helical transmembrane segment spans residues 127 to 147 (AVGYLRALLWGAPGYLFFQVA). The Cytoplasmic segment spans residues 148-159 (RNQCEGLAKTKP). A helical transmembrane segment spans residues 160-180 (GMVMGFIGLLVNIPVNYIFIY). Residues 181–188 (GHFGMPEL) are Periplasmic-facing. A helical transmembrane segment spans residues 189-209 (GGVGCGVATAAVYWVMFLAMV). Residues 210–242 (SYIKRARSMRDIRNEKGTAKPDPAVMKRLIQLG) are Cytoplasmic-facing. The helical transmembrane segment at 243-263 (LPIALALFFEVTLFAVVALLV) threads the bilayer. The Periplasmic portion of the chain corresponds to 264–275 (SPLGIVDVAGHQ). The helical transmembrane segment at 276–296 (IALNFSSLMFVLPMSLAAAVT) threads the bilayer. The Cytoplasmic segment spans residues 297 to 313 (IRVGYRLGQGSTLDAQT). A helical transmembrane segment spans residues 314 to 334 (AARTGLMVGVCMATLTAIFTV). Over 335–349 (SLREQIALLYNDNPE) the chain is Periplasmic. A helical transmembrane segment spans residues 350–370 (VVTLAAHLMLLAAVYQISDSI). Residues 371–386 (QVIGSGILRGYKDTRS) are Cytoplasmic-facing. A helical membrane pass occupies residues 387–407 (IFYITFTAYWVLGLPSGYILA). Topologically, residues 408–417 (LTDLVVEPMG) are periplasmic. A helical membrane pass occupies residues 418 to 438 (PAGFWIGFIIGLTSAAIMMML). The Cytoplasmic segment spans residues 439 to 457 (RMRFLQRMPSAIILQRASR).

The protein belongs to the multi antimicrobial extrusion (MATE) (TC 2.A.66.1) family. MdtK subfamily.

The protein resides in the cell inner membrane. Its function is as follows. Multidrug efflux pump that functions probably as a Na(+)/drug antiporter. The chain is Multidrug resistance protein MdtK from Shigella boydii serotype 4 (strain Sb227).